The primary structure comprises 635 residues: Transaminated amino acid decarboxylase (635 aa).

K588 is covalently cross-linked (Glycyl lysine isopeptide (Lys-Gly) (interchain with G-Cter in ubiquitin)).

It belongs to the TPP enzyme family. The cofactor is Mg(2+). Requires thiamine diphosphate as cofactor.

Its subcellular location is the cytoplasm. The catalysed reaction is 4-methyl-2-oxopentanoate + H(+) = 3-methylbutanal + CO2. The enzyme catalyses (S)-3-methyl-2-oxopentanoate + H(+) = 2-methylbutanal + CO2. It catalyses the reaction indole-3-pyruvate + H(+) = indole-3-acetaldehyde + CO2. It carries out the reaction 3-phenylpyruvate + H(+) = 2-phenylacetaldehyde + CO2. The catalysed reaction is 4-methylsulfanyl-2-oxobutanoate + H(+) = 3-methylsulfanylpropanal + CO2. The enzyme catalyses 3-(4-hydroxyphenyl)pyruvate + H(+) = (4-hydroxyphenyl)acetaldehyde + CO2. Its pathway is amino-acid degradation; Ehrlich pathway. Its function is as follows. One of five 2-oxo acid decarboxylases (PDC1, PDC5, PDC6, ARO10, and THI3) involved in amino acid catabolism. The enzyme catalyzes the decarboxylation of amino acids, which, in a first step, have been transaminated to the corresponding 2-oxo acids (alpha-keto-acids). In a third step, the resulting aldehydes are reduced to alcohols, collectively referred to as fusel oils or alcohols. Its preferred substrates are the transaminated amino acids derived from phenylalanine (phenylpyruvate), tryptophan (3-(indol-3-yl)pyruvate), and probably tyrosine (4-hydroxyphenylpyruvate), but also isoleucine ((3S)-3-methyl-2-oxopentanoate, also alpha-keto-beta-methylvalerate) and methionine (4-methylthio-2-oxobutanoate), whereas transaminated leucine (4-methyl-2-oxopentanoate, also alpha-keto-isocaproate) is a low efficiency substrate and transaminated valine and pyruvate are no substrates. In analogy to the pyruvate decarboxylases the enzyme may in a side-reaction catalyze condensation (or carboligation) reactions leading to the formation of 2-hydroxy ketone, collectively called acyloins. In Saccharomyces cerevisiae (strain ATCC 204508 / S288c) (Baker's yeast), this protein is Transaminated amino acid decarboxylase (ARO10).